Consider the following 340-residue polypeptide: Heat-inducible transcription repressor HrcA (340 aa).

It belongs to the HrcA family.

Its function is as follows. Negative regulator of class I heat shock genes (grpE-dnaK-dnaJ and groELS operons). Prevents heat-shock induction of these operons. This Burkholderia thailandensis (strain ATCC 700388 / DSM 13276 / CCUG 48851 / CIP 106301 / E264) protein is Heat-inducible transcription repressor HrcA.